The following is a 375-amino-acid chain: Anhydro-N-acetylmuramic acid kinase (375 aa).

Residue 12-19 (GTSMDGVD) coordinates ATP.

Belongs to the anhydro-N-acetylmuramic acid kinase family.

The enzyme catalyses 1,6-anhydro-N-acetyl-beta-muramate + ATP + H2O = N-acetyl-D-muramate 6-phosphate + ADP + H(+). It functions in the pathway amino-sugar metabolism; 1,6-anhydro-N-acetylmuramate degradation. The protein operates within cell wall biogenesis; peptidoglycan recycling. Its function is as follows. Catalyzes the specific phosphorylation of 1,6-anhydro-N-acetylmuramic acid (anhMurNAc) with the simultaneous cleavage of the 1,6-anhydro ring, generating MurNAc-6-P. Is required for the utilization of anhMurNAc either imported from the medium or derived from its own cell wall murein, and thus plays a role in cell wall recycling. This Photobacterium profundum (strain SS9) protein is Anhydro-N-acetylmuramic acid kinase.